The following is a 176-amino-acid chain: SFSHIWVQFVFHGVAGAGWQPLVRPPRLGGNRKMGVFATRSPFRPNPLGLSLLKLERIETEGGVRLWCGGADLLDGTPVLDIKPYLPFVEAQPDAAPGFAAVPPVPLEVAWADEISAASLPPPNRLLIEQSIAQDPRPAYQDTPQRVYKMAVDDWEVAFRIEKGMALIEAVMAVEG.

Residues 1–94 (SFSHIWVQFV…YLPFVEAQPD (94 aa)) form the TsaA-like domain. Residues H12, 12–13 (HG), R40, L50, and 74–77 (LDGT) each bind S-adenosyl-L-methionine.

This sequence belongs to the tRNA methyltransferase O family.

It catalyses the reaction N(6)-L-threonylcarbamoyladenosine(37) in tRNA + S-adenosyl-L-methionine = N(6)-methyl,N(6)-L-threonylcarbamoyladenosine(37) in tRNA + S-adenosyl-L-homocysteine + H(+). S-adenosyl-L-methionine-dependent methyltransferase responsible for the addition of the methyl group in the formation of N6-methyl-N6-threonylcarbamoyladenosine at position 37 (m(6)t(6)A37) of the tRNA anticodon loop of tRNA(Thr)(GGU). The methyl group of m(6)t(6)A37 appears to slightly improve the efficiency of the tRNA decoding ability. Binds to tRNA. This is tRNA (adenine(37)-N6)-methyltransferase from Eikenella corrodens.